Here is a 236-residue protein sequence, read N- to C-terminus: SERTA domain-containing protein 1 (236 aa).

The tract at residues Met1–Ala20 is disordered. An SERTA domain is found at Pro38–Ala85. Positions Pro189–Asp211 are disordered. A compositionally biased stretch (basic and acidic residues) spans Gly197–Ala207.

In terms of assembly, interacts with the PHD-bromodomain of TIF1, TRIM28/TIF1B and p300/CBP. Interacts with E2F1 and TFDP1; modulates transactivation activity of TFDP1/E2F complexes. Also interacts with CDK4. Polyubiquitinated, which promotes proteasomal degradation.

In terms of biological role, acts at E2F-responsive promoters as coregulator to integrate signals provided by PHD- and/or bromodomain-containing transcription factors. Stimulates E2F1/TFDP1 transcriptional activity. Renders the activity of cyclin D1/CDK4 resistant to the inhibitory effects of CDKN2A/p16INK4A. In Homo sapiens (Human), this protein is SERTA domain-containing protein 1 (SERTAD1).